Reading from the N-terminus, the 236-residue chain is Ring protein 1 (236 aa).

Homododecamer.

The protein resides in the virion. Functionally, forms the tail multi-ring barrel with ring protein 2, ring protein 3 and ring protein 4. In Bacteroides intestinalis (Bacteroides phage PhiCrAss001), this protein is Ring protein 1.